Reading from the N-terminus, the 458-residue chain is Vitamin K-dependent protein C (458 aa).

The first 27 residues, 1 to 27 (IPDDVGYRNQKTASKEGVCVVSKCQDG), serve as a signal peptide directing secretion. A propeptide spanning residues 28-36 (PNTLPRAKR) is cleaved from the precursor. In terms of domain architecture, Gla spans 37-82 (ANSFLEELRPSSLERECVEEVCDLEEAKEIFQSVDDTLAFWYKYVD). Glu42, Glu43, Glu50, Glu52, Glu55, Glu56, Glu61, Glu62, and Glu65 each carry 4-carboxyglutamate. Cys53 and Cys58 form a disulfide bridge. Cystine bridges form between Cys86-Cys105, Cys95-Cys100, Cys99-Cys114, and Cys116-Cys125. 2 consecutive EGF-like domains span residues 91-126 (SEHPCSSQCCGHGTCADSIGGFSCQCHGGWEGSFCQ) and 130-170 (RFSN…LQCE). At Asp107 the chain carries (3R)-3-hydroxyaspartate. The N-linked (GlcNAc...) asparagine glycan is linked to Asn133. 5 disulfide bridges follow: Cys134–Cys145, Cys141–Cys154, Cys156–Cys169, Cys177–Cys316, and Cys235–Cys251. A Peptidase S1 domain is found at 210-447 (IDGKLTRRGD…YLDWIHSHIE (238 aa)). The active-site Charge relay system is His250. Asn287 carries an N-linked (GlcNAc...) asparagine glycan. Asp296 functions as the Charge relay system in the catalytic mechanism. The N-linked (GlcNAc...) asparagine glycan is linked to Asn352. Disulfide bonds link Cys370–Cys384 and Cys395–Cys423. Ser399 (charge relay system) is an active-site residue.

This sequence belongs to the peptidase S1 family. In terms of assembly, synthesized as a single chain precursor, which is cleaved into a light chain and a heavy chain held together by a disulfide bond. The enzyme is then activated by thrombin, which cleaves a tetradecapeptide from the amino end of the heavy chain; this reaction, which occurs at the surface of endothelial cells, is strongly promoted by thrombomodulin. The vitamin K-dependent, enzymatic carboxylation of some Glu residues allows the modified protein to bind calcium. Post-translationally, the iron and 2-oxoglutarate dependent 3-hydroxylation of aspartate and asparagine is (R) stereospecific within EGF domains. Plasma; synthesized in the liver.

It is found in the secreted. Its subcellular location is the golgi apparatus. The protein resides in the endoplasmic reticulum. It carries out the reaction Degradation of blood coagulation factors Va and VIIIa.. Functionally, protein C is a vitamin K-dependent serine protease that regulates blood coagulation by inactivating factors Va and VIIIa in the presence of calcium ions and phospholipids. Exerts a protective effect on the endothelial cell barrier function. This Oryctolagus cuniculus (Rabbit) protein is Vitamin K-dependent protein C (PROC).